A 412-amino-acid chain; its full sequence is AA9 family lytic polysaccharide monooxygenase A (412 aa).

The first 20 residues, 1 to 20 (MKTTTYSLLALAAASKLASA), serve as a signal peptide directing secretion. His21 and His103 together coordinate Cu(2+). The cysteines at positions 63 and 186 are disulfide-linked. An N-linked (GlcNAc...) asparagine glycan is attached at Asn151. His172 contributes to the O2 binding site. Tyr183 provides a ligand contact to Cu(2+). 2 N-linked (GlcNAc...) asparagine glycosylation sites follow: Asn334 and Asn385. A CBM1 domain is found at 373–409 (GVAKMYERCGGINHTGPTTCESGSVCKKWNPYYYQCV).

This sequence belongs to the polysaccharide monooxygenase AA9 family. The cofactor is Cu(2+).

The protein resides in the secreted. The catalysed reaction is [(1-&gt;4)-beta-D-glucosyl]n+m + reduced acceptor + O2 = 4-dehydro-beta-D-glucosyl-[(1-&gt;4)-beta-D-glucosyl]n-1 + [(1-&gt;4)-beta-D-glucosyl]m + acceptor + H2O.. Its function is as follows. Lytic polysaccharide monooxygenase (LPMO) that depolymerizes crystalline and amorphous polysaccharides via the oxidation of scissile alpha- or beta-(1-4)-glycosidic bonds, yielding C4 oxidation products. Catalysis by LPMOs requires the reduction of the active-site copper from Cu(II) to Cu(I) by a reducing agent and H(2)O(2) or O(2) as a cosubstrate. This is AA9 family lytic polysaccharide monooxygenase A (eglD) from Aspergillus niger (strain ATCC MYA-4892 / CBS 513.88 / FGSC A1513).